An 878-amino-acid chain; its full sequence is MPEIDARLREDVHQLGELLGDTIREQYGPRFLDKIELIRKGAKAARRGSAEGAQQLTATLDGLEEDELLPVARAFNQFLNLANIAEQYHRIRRRRPNEPEPFENLVLEELLGRLKDAGHAPGQLARQLAGLEIELVLTAHPTEVARRTLIQKYDAITAQLAAKDHADLLPEERSRIQQRLQRLVAEAWHTDEIRKVRPTPVDEAKWGFAVIEHSLWQALPNVLRHVDEVLLRSTGERLPLTAAPLRFASWMGGDRDGNPNVTASVTREVLLLARWMAADLYLRDIDRLAAELSMQQASPQLLARVGDSAEPYRALLKQLRERLRVTRNWTHQALAGEVPAAEGVLEHNRDLVEPLQLCHESLHACGMGVIADGALLDCLRRAATFGLFLVRLDVRQDSARHAAALSEITEYLELGSYDEWDEKTRLEFLLEELNSRRPLLPAHYQPSADTAEVLATCRAIAAAPPASLGSYVISMAGQPSDVLAVQLLLKESGVDWPMRVVPLFETLDDLDNAGPCMERLLTLPGYRSRLSGVQEVMIGYSDSAKDAGTLTAAWAQYRAQEKLVEICRQHEVELLLFHGRGGTVGRGGGPAHAAILSQPPGSVAGRFRVTEQGEMIRFKFGLPDIAEQNLNLYLAAVLEATLMPPPAPEPAWRAQMDRLAKDALLAYRRVVRDDPQFVEYFRLATPEQELGRLPLGSRPAKRREGGVESLRAIPWIFAWTQTRLMLPAWLGWETALLNAIERGEGALLGQMREQWPFFTTRIDMLEMVLAKADADIARLYDERLVPLELRPLGRRLRDLLSQAVRVVLGLTGQSLLLAHASETRESISVRNSYLDPLHLLQAELLARSRRCRGDACGGLEQALLVTVAGVAAGLRNTG.

Active-site residues include His-140 and Lys-545.

The protein belongs to the PEPCase type 1 family. The cofactor is Mg(2+).

It catalyses the reaction oxaloacetate + phosphate = phosphoenolpyruvate + hydrogencarbonate. Its function is as follows. Forms oxaloacetate, a four-carbon dicarboxylic acid source for the tricarboxylic acid cycle. In Pseudomonas aeruginosa (strain ATCC 15692 / DSM 22644 / CIP 104116 / JCM 14847 / LMG 12228 / 1C / PRS 101 / PAO1), this protein is Phosphoenolpyruvate carboxylase.